We begin with the raw amino-acid sequence, 77 residues long: uncharacterized protein (77 aa).

This is an uncharacterized protein from Salmonella typhimurium (strain LT2 / SGSC1412 / ATCC 700720).